We begin with the raw amino-acid sequence, 164 residues long: FMN reductase (NADH) RutF (164 aa).

Belongs to the non-flavoprotein flavin reductase family. RutF subfamily.

It carries out the reaction FMNH2 + NAD(+) = FMN + NADH + 2 H(+). Catalyzes the reduction of FMN to FMNH2 which is used to reduce pyrimidine by RutA via the Rut pathway. The sequence is that of FMN reductase (NADH) RutF from Klebsiella pneumoniae subsp. pneumoniae (strain ATCC 700721 / MGH 78578).